Consider the following 441-residue polypeptide: Putative F-box/FBD/LRR-repeat protein At4g00315 (441 aa).

In terms of domain architecture, F-box spans 1-47 (MDKTSQLPDELLVKVLSFLPTKDAVRTSLLSMRWKSLWMWLPKLEYD). 8 LRR repeats span residues 57–82 (QGLA…SLKL), 87–115 (IGSI…SLKL), 137–164 (ILKL…FLGR), 165–190 (VTYS…VVER), 211–236 (LKMS…KVTD), 243–271 (SDNE…DFVL), 293–318 (LGVY…KICS), and 319–344 (CDSD…EAYV). The FBD domain maps to 358–410 (QWGNQLNCVPKCLLSSLETFKWSEMYGLLQNQMDVAKYILRNARCLKSATIFF).

This Arabidopsis thaliana (Mouse-ear cress) protein is Putative F-box/FBD/LRR-repeat protein At4g00315.